Consider the following 353-residue polypeptide: Terpene synthase 1 (353 aa).

The DDxx(x)D/E motif motif lies at 81–86 (DDAIDA). Residues 222–230 (NDLVSYEKE) carry the NDxxSxxxD/E motif motif.

Belongs to the terpene synthase family.

The enzyme catalyses (2E,6E)-farnesyl diphosphate = (2S,3R,6S,9S)-(-)-protoillud-7-ene + diphosphate. Functionally, terpene synthase that converts its substrate farnesyl diphosphate (FPP) into the sesquiterpene protoillud-7-ene. The protein is Terpene synthase 1 of Tieghemostelium lacteum (Slime mold).